A 370-amino-acid chain; its full sequence is Phospho-2-dehydro-3-deoxyheptonate aldolase, tyrosine-inhibited (370 aa).

This sequence belongs to the class-I DAHP synthase family.

The enzyme catalyses D-erythrose 4-phosphate + phosphoenolpyruvate + H2O = 7-phospho-2-dehydro-3-deoxy-D-arabino-heptonate + phosphate. The protein operates within metabolic intermediate biosynthesis; chorismate biosynthesis; chorismate from D-erythrose 4-phosphate and phosphoenolpyruvate: step 1/7. Its activity is regulated as follows. Inhibited by tyrosine. Functionally, stereospecific condensation of phosphoenolpyruvate (PEP) and D-erythrose-4-phosphate (E4P) giving rise to 3-deoxy-D-arabino-heptulosonate-7-phosphate (DAHP). The protein is Phospho-2-dehydro-3-deoxyheptonate aldolase, tyrosine-inhibited (ARO4) of Candida albicans (strain SC5314 / ATCC MYA-2876) (Yeast).